The following is a 182-amino-acid chain: Orotate phosphoribosyltransferase (182 aa).

Residues Arg-91, Lys-92, Lys-95, His-97, and 117–125 contribute to the 5-phospho-alpha-D-ribose 1-diphosphate site; that span reads EDVTTTGGS. The orotate site is built by Thr-121 and Arg-149.

The protein belongs to the purine/pyrimidine phosphoribosyltransferase family. PyrE subfamily. In terms of assembly, homodimer. Mg(2+) is required as a cofactor.

The enzyme catalyses orotidine 5'-phosphate + diphosphate = orotate + 5-phospho-alpha-D-ribose 1-diphosphate. The protein operates within pyrimidine metabolism; UMP biosynthesis via de novo pathway; UMP from orotate: step 1/2. Catalyzes the transfer of a ribosyl phosphate group from 5-phosphoribose 1-diphosphate to orotate, leading to the formation of orotidine monophosphate (OMP). The protein is Orotate phosphoribosyltransferase of Pyrococcus furiosus (strain ATCC 43587 / DSM 3638 / JCM 8422 / Vc1).